The primary structure comprises 245 residues: MANRPQALKIHPQPVLAPGELDSVRRQLAAASAQERVRWGLARFPGRIVLASSFGAQAAVSLHLVTREQPDIPVVLVDTGYLFPETYRFVDELTERLGLNLQVARPAHSAAWQEARFGRLWEQGVEGIERYNRMNKVEPMQQALETLGADAWFAGLRRQQAHSRQQRQVVEIQNDRVKVHPIIDWTDRDVHRYLTRHDLPYHPLWHEGYVSIGDVHTTRRLADGMSEEETRFFGLRRECGLHDLV.

Cys239 (nucleophile; cysteine thiosulfonate intermediate) is an active-site residue.

It belongs to the PAPS reductase family. CysH subfamily.

The protein resides in the cytoplasm. It catalyses the reaction [thioredoxin]-disulfide + sulfite + adenosine 3',5'-bisphosphate + 2 H(+) = [thioredoxin]-dithiol + 3'-phosphoadenylyl sulfate. The protein operates within sulfur metabolism; hydrogen sulfide biosynthesis; sulfite from sulfate: step 3/3. Functionally, catalyzes the formation of sulfite from phosphoadenosine 5'-phosphosulfate (PAPS) using thioredoxin as an electron donor. This is Phosphoadenosine 5'-phosphosulfate reductase from Alkalilimnicola ehrlichii (strain ATCC BAA-1101 / DSM 17681 / MLHE-1).